Consider the following 523-residue polypeptide: Frizzled-2 (523 aa).

Residues 1–120 (PDHGFCQPIS…HGAEQICVGQ (120 aa)) enclose the FZ domain. At 1 to 205 (PDHGFCQPIS…EDEIRFARVW (205 aa)) the chain is on the extracellular side. Disulfide bonds link C6–C67, C14–C60, C51–C88, C77–C117, and C81–C105. N20 carries an N-linked (GlcNAc...) asparagine glycan. N-linked (GlcNAc...) asparagine glycosylation occurs at N121. A helical transmembrane segment spans residues 206 to 226 (ILVWSVLCCASTFFTVTTYLV). The Cytoplasmic segment spans residues 227-237 (DMQRFRYPERP). The helical transmembrane segment at 238 to 258 (IIFLSGCYTMVSVAYIAGFVL) threads the bilayer. Residues 259–285 (EERVVCNERFQEDGYRTVVQGTKKEGC) lie on the Extracellular side of the membrane. Residues 286-306 (TILFMMLYFFSMASSIWWVIL) form a helical membrane-spanning segment. At 307 to 328 (SLTWFLAAGMKWGHEAIEANSQ) the chain is on the cytoplasmic side. The helical transmembrane segment at 329–349 (YFHLAAWAVPAVKTITILAMG) threads the bilayer. The Extracellular portion of the chain corresponds to 350–372 (QIDGDLLSGVCFVGLNGIDPLRG). A helical transmembrane segment spans residues 373–393 (FVLAPLFVYLFIGTSFLLAGF). At 394–419 (VSLFRIRTIMKHGGTKTEKLERLMVR) the chain is on the cytoplasmic side. The helical transmembrane segment at 420-440 (IGVFSVLYTVPATIVIACYFY) threads the bilayer. Residues 441-477 (EQAFRQHWERSWISQHCKSLAIPCPLHFTPRMTPDFT) lie on the Extracellular side of the membrane. Residues 478-498 (VYMIKYLMTLIVGITSGFWIF) traverse the membrane as a helical segment. Over 499-523 (SGKTLHSWRKFYTRLTNSRQGETTV) the chain is Cytoplasmic. The short motif at 501 to 506 (KTLHSW) is the Lys-Thr-X-X-X-Trp motif, mediates interaction with the PDZ domain of Dvl family members element. The PDZ-binding motif lies at 521-523 (TTV).

The protein belongs to the G-protein coupled receptor Fz/Smo family. In terms of tissue distribution, expressed in the developing head and limbs. Expressed broadly in cranial ectoderm. Also expressed in the developing somites (dermomyotome) and in other cranial placodes, including the olfactory, lens, and otic placodes (rostral rim of the vesicle).

It is found in the membrane. The protein resides in the cell membrane. Receptor for Wnt proteins. Most of frizzled receptors are coupled to the beta-catenin canonical signaling pathway, which leads to the activation of disheveled proteins, inhibition of GSK-3 kinase, nuclear accumulation of beta-catenin and activation of Wnt target genes. A second signaling pathway involving PKC and calcium fluxes has been seen for some family members, but it is not yet clear if it represents a distinct pathway or if it can be integrated in the canonical pathway, as PKC seems to be required for Wnt-mediated inactivation of GSK-3 kinase. Both pathways seem to involve interactions with G-proteins. May be involved in transduction and intercellular transmission of polarity information during tissue morphogenesis and/or in differentiated tissues. The sequence is that of Frizzled-2 (FZD2) from Gallus gallus (Chicken).